Consider the following 875-residue polypeptide: Alanine--tRNA ligase (875 aa).

Zn(2+) contacts are provided by His565, His569, Cys666, and His670.

The protein belongs to the class-II aminoacyl-tRNA synthetase family. Zn(2+) is required as a cofactor.

It is found in the cytoplasm. The catalysed reaction is tRNA(Ala) + L-alanine + ATP = L-alanyl-tRNA(Ala) + AMP + diphosphate. In terms of biological role, catalyzes the attachment of alanine to tRNA(Ala) in a two-step reaction: alanine is first activated by ATP to form Ala-AMP and then transferred to the acceptor end of tRNA(Ala). Also edits incorrectly charged Ser-tRNA(Ala) and Gly-tRNA(Ala) via its editing domain. The protein is Alanine--tRNA ligase of Methylibium petroleiphilum (strain ATCC BAA-1232 / LMG 22953 / PM1).